The sequence spans 243 residues: Urease accessory protein UreF 2 (243 aa).

This sequence belongs to the UreF family. UreD, UreF and UreG form a complex that acts as a GTP-hydrolysis-dependent molecular chaperone, activating the urease apoprotein by helping to assemble the nickel containing metallocenter of UreC. The UreE protein probably delivers the nickel.

Its subcellular location is the cytoplasm. Functionally, required for maturation of urease via the functional incorporation of the urease nickel metallocenter. In terms of biological role, disrupting the ure2 operon has no effect on urease activity or pathogen survival in BALB/c mice when administered orally. The protein is Urease accessory protein UreF 2 of Brucella abortus (strain 2308).